We begin with the raw amino-acid sequence, 378 residues long: Stimulator of interferon genes protein (378 aa).

At 1–17 (MPYSSLHPSIPQPRGLR) the chain is on the cytoplasmic side. The mediates interaction with ZDHHC1 and ZDHHC11 stretch occupies residues 1–190 (MPYSSLHPSI…AYNQRHKNVL (190 aa)). A helical membrane pass occupies residues 18–34 (AQVAALVLLGACLVALW). The Lumenal segment spans residues 35 to 44 (GLGELPEYTL). A helical transmembrane segment spans residues 45–69 (RWLVLHLASQQIGLLVKGLCSLAEE). The Cytoplasmic segment spans residues 70-91 (LCHVHSRYQSSYWRAARACLGC). 2 S-palmitoyl cysteine lipidation sites follow: Cys88 and Cys91. Residues 92–106 (PIRCGALLLLSCYFY) traverse the membrane as a helical segment. Residues 107-116 (FSIRDKAGLP) lie on the Lumenal side of the membrane. The chain crosses the membrane as a helical span at residues 117–134 (LPWMLALLGLSQALNILL). The Cytoplasmic portion of the chain corresponds to 135–378 (GLQHLAPAEV…QPLPLRSDIF (244 aa)). Residue Lys150 forms a Glycyl lysine isopeptide (Lys-Gly) (interchain with G-Cter in ubiquitin) linkage. The segment at 153-339 (FNVAHGLAWS…LRHLRQEERE (187 aa)) is cyclic dinucleotide-binding domain (CBD). Positions 162 and 167 each coordinate 2',3'-cGAMP. 3',3'-c-di-GMP contacts are provided by Ser162 and Tyr167. Tyr167 serves as a coordination point for 2',3'-cUAMP. Lys236 participates in a covalent cross-link: Glycyl lysine isopeptide (Lys-Gly) (interchain with G-Cter in ubiquitin). Residues Arg238 and Thr263 each contribute to the 2',3'-cGAMP site. 2 residues coordinate 2',3'-cUAMP: Arg238 and Thr263. 3',3'-c-di-GMP-binding positions include 238–241 (RVYT) and Thr263. Positions 339–378 (EVTMGSAETSVVPTSSTLSQEPELLISGMEQPLPLRSDIF) are C-terminal tail (CTT). At Ser354 the chain carries Phosphoserine. Thr355 is modified (phosphothreonine). Phosphoserine; by TBK1 is present on residues Ser357 and Ser365. The pLxIS motif signature appears at 362–365 (LLIS).

It belongs to the STING family. In terms of assembly, homodimer; forms a homodimer in absence of cyclic nucleotide (c-di-GMP or cGAMP); 'Lys-63'-linked ubiquitination at Lys-150 is required for homodimerization. Homotetramer; in presence of cyclic nucleotide (c-di-GMP or cGAMP), forms tetramers and higher-order oligomers through side-by-side packing. Interacts (when phosphorylated) with IRF3; following activation and phosphorylation on the pLxIS motif by TBK1, recruits IRF3. Interacts with DDX58/RIG-I, MAVS and SSR2. Interacts with RNF5 and TRIM56. Interacts with TBK1; when homodimer, leading to subsequent production of IFN-beta. Interacts with IFIT1 and IFIT2. Interacts with TRIM29; this interaction induces STING1 ubiquitination and subsequent degradation. Associates with the MHC-II complex. Interacts with STEEP1; interaction takes place upon cGAMP-activation and STING1 phosphorylation by MAP3K7/TAK1 and promotes STING1 translocation to COPII vesicles. Interacts with SEC24A, SEC24B and SEC24C; promoting translocation to COPII vesicles. Interacts (when ubiquitinated) with SQSTM1; leading to relocalization to autophagosomes. Interacts with SURF4. Interacts with HNRNPA2B1. Interacts with ZDHHC1; ZDHHC1 constitutively interacts with STING1 and in presence of DNA viruses activates it by promoting its cGAMP-induced oligomerization and the recruitment of downstream signaling components. Interacts with ZDHHC11; in presence of DNA viruses promotes the recruitment of IRF3 to STING1. Interacts with TOMM70. Interacts with TAB1; promoting recruitment of TAB1 to the endoplasmic reticulum membrane and subsequent activation of MAP3K7/TAK1. Interacts (via transmembrane domain) with TMEM203. Interacts with DDX41. (Microbial infection) Interacts with African swine fever virus/ASFV protein A528R; this interaction mediates STING1 degradation. As to quaternary structure, (Microbial infection) Interacts with African swine fever virus/ASFV minor capsid protein p17. In terms of assembly, (Microbial infection) Interacts with Pseudorabies virus protein UL13; this interaction mediates STING1 degradation in a RNF5-dependent manner. Phosphorylation by TBK1 leads to activation and production of IFN-beta. Following cyclic nucleotide (c-di-GMP or cGAMP)-binding, activation and translocation from the endoplasmic reticulum, STING1 is phosphorylated by TBK1 at Ser-365 in the pLxIS motif. The phosphorylated pLxIS motif constitutes an IRF3-binding motif, leading to recruitment of the transcription factor IRF3 to induce type-I interferons and other cytokines. Phosphorylated on tyrosine residues upon MHC-II aggregation. Dephosphorylation by PPP6C leads to inactivation and decreased production of IFN-beta. Phosphorylation at Ser-357 is also required to activate IRF3. Phosphorylation at Ser-354 by MAP3K7/TAK1 facilitates its interaction with STEEP1, promoting STING1 translocation to COPII vesicles. In terms of processing, ubiquitinated. Ubiquitinated via 'Lys-63'-linked ubiquitin chains in response to double-stranded DNA treatment, leading to relocalization to autophagosomes and subsequent degradation; this process is dependent on SQSTM1. 'Lys-63'-linked ubiquitination mediated by TRIM56 at Lys-150 promotes homodimerization and recruitment of the antiviral kinase TBK1 and subsequent production of IFN-beta. 'Lys-48'-linked polyubiquitination at Lys-150 occurring after viral infection is mediated by RNF5 and leads to proteasomal degradation. 'Lys-11'-linked polyubiquitination at Lys-150 by RNF26 leads to stabilize STING1: it protects STING1 from RNF5-mediated 'Lys-48'-linked polyubiquitination. 'Lys-33'-linked and 'Lys-48'-linked deubiquitinated by USP20; leading to its stabilization and promotion of innate antiviral response. 'Lys-48'-linked deubiquitinated by USP44; leading to its stabilization and promotion of innate antiviral response. Deubiquitinated by USP13; leading to inhibition of innate antiviral response. 'Lys-63'-linked deubiquitinated by USP49; leading to inhibition of the subsequent recruitment of TBK1 to the signaling complex. 'Lys-63'-linked ubiquitination mediated by RNF39 promotes the activation of the cGAS-STING pathway. Post-translationally, palmitoylation takes place in the Golgi apparatus and creates a platform for the recruitment of TBK1. In terms of tissue distribution, expressed at higher level in the spleen, lymph node, lung and bone marrow, followed by the small intestine, heart, liver and brain, and to a lesser extent in the stomach and kidney.

Its subcellular location is the endoplasmic reticulum membrane. The protein localises to the cytoplasm. It is found in the perinuclear region. The protein resides in the endoplasmic reticulum-Golgi intermediate compartment membrane. It localises to the golgi apparatus membrane. Its subcellular location is the cytoplasmic vesicle. The protein localises to the autophagosome membrane. It is found in the mitochondrion outer membrane. The protein resides in the cell membrane. It carries out the reaction H(+)(in) = H(+)(out). Facilitator of innate immune signaling that acts as a sensor of cytosolic DNA from bacteria and viruses and promotes the production of type I interferon (IFN-alpha and IFN-beta). Innate immune response is triggered in response to non-CpG double-stranded DNA from viruses and bacteria delivered to the cytoplasm. Acts by binding cyclic dinucleotides: recognizes and binds cyclic di-GMP (c-di-GMP), a second messenger produced by bacteria, cyclic UMP-AMP (2',3'-cUAMP), and cyclic GMP-AMP (cGAMP), a messenger produced by CGAS in response to DNA virus in the cytosol. Upon binding to c-di-GMP, cUAMP or cGAMP, STING1 oligomerizes, translocates from the endoplasmic reticulum and is phosphorylated by TBK1 on the pLxIS motif, leading to recruitment and subsequent activation of the transcription factor IRF3 to induce expression of type I interferon and exert a potent anti-viral state. Exhibits 2',3' phosphodiester linkage-specific ligand recognition: can bind both 2'-3' linked cGAMP (2'-3'-cGAMP) and 3'-3' linked cGAMP but is preferentially activated by 2'-3' linked cGAMP. The preference for 2'-3'-cGAMP, compared to other linkage isomers is probably due to the ligand itself, whichs adopts an organized free-ligand conformation that resembles the STING1-bound conformation and pays low energy costs in changing into the active conformation. In addition to promote the production of type I interferons, plays a direct role in autophagy. Following cGAMP-binding, STING1 buds from the endoplasmic reticulum into COPII vesicles, which then form the endoplasmic reticulum-Golgi intermediate compartment (ERGIC). The ERGIC serves as the membrane source for WIPI2 recruitment and LC3 lipidation, leading to formation of autophagosomes that target cytosolic DNA or DNA viruses for degradation by the lysosome. Promotes autophagy by acting as a proton channel that directs proton efflux from the Golgi to facilitate MAP1LC3B/LC3B lipidation. The autophagy- and interferon-inducing activities can be uncoupled and autophagy induction is independent of TBK1 phosphorylation. Autophagy is also triggered upon infection by bacteria: following c-di-GMP-binding, which is produced by live Gram-positive bacteria, promotes reticulophagy. May be involved in translocon function, the translocon possibly being able to influence the induction of type I interferons. May be involved in transduction of apoptotic signals via its association with the major histocompatibility complex class II (MHC-II). The protein is Stimulator of interferon genes protein of Sus scrofa (Pig).